A 375-amino-acid polypeptide reads, in one-letter code: RING-H2 finger protein ATL16 (375 aa).

Residues 1-20 (MDLSNRRNPLRDLSFPPPPP) form a disordered region. A helical membrane pass occupies residues 39–59 (VAVIGILATAFLLVSYYVFVI). Residues 138–180 (CSVCLSEFQDEEKLRIIPNCSHLFHIDCIDVWLQNNANCPLCR) form an RING-type; atypical zinc finger. Disordered regions lie at residues 223-266 (GSDR…DRGG) and 356-375 (SFGS…YFEP). Residues 238–257 (QERSNSGYLLNENTQNSISP) are compositionally biased toward polar residues.

It belongs to the RING-type zinc finger family. ATL subfamily.

Its subcellular location is the membrane. It catalyses the reaction S-ubiquitinyl-[E2 ubiquitin-conjugating enzyme]-L-cysteine + [acceptor protein]-L-lysine = [E2 ubiquitin-conjugating enzyme]-L-cysteine + N(6)-ubiquitinyl-[acceptor protein]-L-lysine.. The protein operates within protein modification; protein ubiquitination. This is RING-H2 finger protein ATL16 (ATL16) from Arabidopsis thaliana (Mouse-ear cress).